Consider the following 486-residue polypeptide: dTDP-4-dehydro-6-deoxy-alpha-D-glucopyranose 2,3-dehydratase (486 aa).

DTDP-4-dehydro-6-deoxy-alpha-D-glucose is bound by residues Trp66, 149-153 (TRSNY), Ser187, Trp304, Arg367, 383-385 (QCS), 388-389 (NY), and 421-424 (EGGR).

This sequence belongs to the hexose 2,3-dehydratase family. In terms of assembly, homodimer.

The enzyme catalyses dTDP-4-dehydro-6-deoxy-alpha-D-glucose = dTDP-3,4-didehydro-2,6-dideoxy-alpha-D-glucose + H2O. Its function is as follows. Involved in the biosynthesis of forosamine ((4-dimethylamino)-2,3,4,6-tetradeoxy-alpha-D-threo-hexopyranose), a highly deoxygenated sugar component of several bioactive natural products such as the insecticidal spinosyns A and D. Catalyzes the removal of the hydroxyl group at position C-2 of the hexose ring of dTDP-4-dehydro-6-deoxy-alpha-D-glucopyranose, and the oxidation of the hydroxyl group at position C-3 to form a carbonyl functionality. The product of the reaction, dTDP-2,6-dideoxy-D-glycero-hex-2-enos-4-ulose, is a highly unstable diketosugar, which spontaneously forms dTDP-3,4-didehydro-2,6-dideoxy-alpha-D-glucose. This chain is dTDP-4-dehydro-6-deoxy-alpha-D-glucopyranose 2,3-dehydratase, found in Saccharopolyspora spinosa.